The primary structure comprises 133 residues: Cytochrome c-type biogenesis protein CcmE (133 aa).

Residues Met-1 to Arg-7 lie on the Cytoplasmic side of the membrane. The chain crosses the membrane as a helical; Signal-anchor for type II membrane protein span at residues Leu-8–Lys-28. The Periplasmic portion of the chain corresponds to Leu-29–Lys-133. Heme contacts are provided by His-121 and Tyr-125.

Belongs to the CcmE/CycJ family.

The protein localises to the cell inner membrane. Heme chaperone required for the biogenesis of c-type cytochromes. Transiently binds heme delivered by CcmC and transfers the heme to apo-cytochromes in a process facilitated by CcmF and CcmH. This is Cytochrome c-type biogenesis protein CcmE from Ehrlichia canis (strain Jake).